Here is a 78-residue protein sequence, read N- to C-terminus: Beta-defensin 105A (78 aa).

The N-terminal stretch at 1 to 27 (MALIRKTFYFLFAVFFILVQLPSGCQA) is a signal peptide. Disulfide bonds link cysteine 43–cysteine 74, cysteine 53–cysteine 67, and cysteine 57–cysteine 73.

This sequence belongs to the beta-defensin family.

Its subcellular location is the secreted. Has antimicrobial activity. The chain is Beta-defensin 105A (DEFB105A) from Gorilla gorilla gorilla (Western lowland gorilla).